A 412-amino-acid polypeptide reads, in one-letter code: Proline-rich protein 30 (412 aa).

The span at 33–45 (HNLQPLSAHQSLR) shows a compositional bias: polar residues. 3 disordered regions span residues 33 to 75 (HNLQ…QFGS), 123 to 174 (PLTP…SNRQ), and 318 to 412 (PKEV…KSSV). Low complexity-rich tracts occupy residues 126–142 (PSFS…PHSP) and 334–350 (PSPA…ADPA). The segment covering 353–372 (TPSQTRSFRSAGLQSPNSPR) has biased composition (polar residues).

The chain is Proline-rich protein 30 (PRR30) from Macaca fascicularis (Crab-eating macaque).